Reading from the N-terminus, the 256-residue chain is Transcription factor bHLH131 (256 aa).

In terms of domain architecture, bHLH spans 91–140 (VAAKKHSDAERRRRLRINSQFATLRTILPNLVKQDKASVLGETVRYFNEL).

In terms of assembly, homodimer.

The protein resides in the nucleus. The polypeptide is Transcription factor bHLH131 (BHLH131) (Arabidopsis thaliana (Mouse-ear cress)).